A 174-amino-acid polypeptide reads, in one-letter code: Pituitary tumor-transforming gene 1 protein-interacting protein (174 aa).

The signal sequence occupies residues 1–29 (MAPANLGLTPHWVMLLGAVLLLLLSGASA). Residues 30 to 93 (QEPPRVGCSE…RWGVCWVNFE (64 aa)) lie on the Extracellular side of the membrane. Positions 36 to 89 (GCSEYTNRSCEECLRNVSCLWCNENKACMDYPVRKILPPASLCKLSSARWGVCW) constitute a PSI domain. N-linked (GlcNAc...) asparagine glycans are attached at residues Asn-42 and Asn-51. Residues 94 to 114 (ALIITMSVLGGSVLLGITVCC) form a helical membrane-spanning segment. The Cytoplasmic segment spans residues 115–174 (CYCCRRKKSRKPDKSDERAMREQEERRVRQEERRAEMKSRHDEIRKKYGLFKEQNPYEKF). A disordered region spans residues 125 to 155 (KPDKSDERAMREQEERRVRQEERRAEMKSRH). Residues 126-155 (PDKSDERAMREQEERRVRQEERRAEMKSRH) are compositionally biased toward basic and acidic residues. Positions 127–163 (DKSDERAMREQEERRVRQEERRAEMKSRHDEIRKKYG) form a coiled coil. Tyr-171 is subject to Phosphotyrosine.

Interacts with PTTG1.

The protein resides in the cell membrane. It is found in the cytoplasm. The protein localises to the nucleus. Its function is as follows. May facilitate PTTG1 nuclear translocation. The polypeptide is Pituitary tumor-transforming gene 1 protein-interacting protein (Pttg1ip) (Mus musculus (Mouse)).